We begin with the raw amino-acid sequence, 147 residues long: Riboflavin kinase (147 aa).

Residue 15-20 participates in CDP binding; that stretch reads GLGEGR. Positions 44 and 46 each coordinate Mg(2+). The FMN site is built by threonine 97 and glutamate 104. 109–112 provides a ligand contact to CDP; it reads TELR.

The protein belongs to the archaeal riboflavin kinase family. Requires Mg(2+) as cofactor.

It catalyses the reaction riboflavin + CTP = CDP + FMN + H(+). Its pathway is cofactor biosynthesis; FMN biosynthesis; FMN from riboflavin (CTP route): step 1/1. In terms of biological role, catalyzes the CTP-dependent phosphorylation of riboflavin (vitamin B2) to form flavin mononucleotide (FMN). This chain is Riboflavin kinase, found in Methanopyrus kandleri (strain AV19 / DSM 6324 / JCM 9639 / NBRC 100938).